We begin with the raw amino-acid sequence, 48 residues long: ATP synthase protein 8 (48 aa).

Residues 13 to 32 (VVFTLISLSFIFFVFSKYIL) traverse the membrane as a helical segment.

Belongs to the ATPase protein 8 family. In terms of assembly, F-type ATPases have 2 components, CF(1) - the catalytic core - and CF(0) - the membrane proton channel.

The protein localises to the mitochondrion membrane. Functionally, mitochondrial membrane ATP synthase (F(1)F(0) ATP synthase or Complex V) produces ATP from ADP in the presence of a proton gradient across the membrane which is generated by electron transport complexes of the respiratory chain. F-type ATPases consist of two structural domains, F(1) - containing the extramembraneous catalytic core and F(0) - containing the membrane proton channel, linked together by a central stalk and a peripheral stalk. During catalysis, ATP synthesis in the catalytic domain of F(1) is coupled via a rotary mechanism of the central stalk subunits to proton translocation. Part of the complex F(0) domain. Minor subunit located with subunit a in the membrane. This is ATP synthase protein 8 (ATP8) from Trichophyton rubrum (Athlete's foot fungus).